The chain runs to 175 residues: Transcriptional activatory protein BadR (175 aa).

One can recognise an HTH marR-type domain in the interval 20 to 156 (ANRLFFRLYQ…TLHYLLKILD (137 aa)).

In terms of biological role, transcriptional activator of genes for the anaerobic degradation of benzoate. The sequence is that of Transcriptional activatory protein BadR (badR) from Rhodopseudomonas palustris (strain ATCC BAA-98 / CGA009).